Consider the following 545-residue polypeptide: CTP synthase (545 aa).

Positions 1–266 are amidoligase domain; sequence MTTRYIFVTG…DDLVVKRFGL (266 aa). Position 14 (Ser14) interacts with CTP. UTP is bound at residue Ser14. ATP is bound by residues 15 to 20 and Asp72; that span reads SLGKGI. Mg(2+) is bound by residues Asp72 and Glu140. CTP-binding positions include 147 to 149, 187 to 192, and Lys223; these read DIE and KTKPTQ. Residues 187–192 and Lys223 contribute to the UTP site; that span reads KTKPTQ. Residue 239-241 coordinates ATP; that stretch reads KDV. One can recognise a Glutamine amidotransferase type-1 domain in the interval 291 to 542; sequence VIGMVGKYIE…IAAASAHQKR (252 aa). Residue Gly352 participates in L-glutamine binding. Cys379 acts as the Nucleophile; for glutamine hydrolysis in catalysis. L-glutamine contacts are provided by residues 380 to 383, Glu403, and Arg470; that span reads LGMQ. Residues His515 and Glu517 contribute to the active site.

This sequence belongs to the CTP synthase family. In terms of assembly, homotetramer.

It carries out the reaction UTP + L-glutamine + ATP + H2O = CTP + L-glutamate + ADP + phosphate + 2 H(+). It catalyses the reaction L-glutamine + H2O = L-glutamate + NH4(+). The enzyme catalyses UTP + NH4(+) + ATP = CTP + ADP + phosphate + 2 H(+). Its pathway is pyrimidine metabolism; CTP biosynthesis via de novo pathway; CTP from UDP: step 2/2. Its activity is regulated as follows. Allosterically activated by GTP, when glutamine is the substrate; GTP has no effect on the reaction when ammonia is the substrate. The allosteric effector GTP functions by stabilizing the protein conformation that binds the tetrahedral intermediate(s) formed during glutamine hydrolysis. Inhibited by the product CTP, via allosteric rather than competitive inhibition. Catalyzes the ATP-dependent amination of UTP to CTP with either L-glutamine or ammonia as the source of nitrogen. Regulates intracellular CTP levels through interactions with the four ribonucleotide triphosphates. The sequence is that of CTP synthase from Shewanella baltica (strain OS155 / ATCC BAA-1091).